Here is a 329-residue protein sequence, read N- to C-terminus: Ferredoxin--NADP reductase (329 aa).

Residues aspartate 28, glutamine 36, tyrosine 41, alanine 81, phenylalanine 115, aspartate 282, and threonine 323 each contribute to the FAD site.

It belongs to the ferredoxin--NADP reductase type 2 family. In terms of assembly, homodimer. FAD serves as cofactor.

The catalysed reaction is 2 reduced [2Fe-2S]-[ferredoxin] + NADP(+) + H(+) = 2 oxidized [2Fe-2S]-[ferredoxin] + NADPH. In Anaplasma marginale (strain St. Maries), this protein is Ferredoxin--NADP reductase.